Reading from the N-terminus, the 121-residue chain is NADH-quinone oxidoreductase subunit A (121 aa).

The next 3 membrane-spanning stretches (helical) occupy residues 8–28, 65–85, and 93–113; these read YLPI…TIIG, LVAI…PWAI, and QGMI…FYII.

Belongs to the complex I subunit 3 family. As to quaternary structure, NDH-1 is composed of 14 different subunits. Subunits NuoA, H, J, K, L, M, N constitute the membrane sector of the complex.

The protein resides in the cell inner membrane. It carries out the reaction a quinone + NADH + 5 H(+)(in) = a quinol + NAD(+) + 4 H(+)(out). Its function is as follows. NDH-1 shuttles electrons from NADH, via FMN and iron-sulfur (Fe-S) centers, to quinones in the respiratory chain. The immediate electron acceptor for the enzyme in this species is believed to be a menaquinone. Couples the redox reaction to proton translocation (for every two electrons transferred, four hydrogen ions are translocated across the cytoplasmic membrane), and thus conserves the redox energy in a proton gradient. The polypeptide is NADH-quinone oxidoreductase subunit A (Flavobacterium psychrophilum (strain ATCC 49511 / DSM 21280 / CIP 103535 / JIP02/86)).